Consider the following 122-residue polypeptide: Large ribosomal subunit protein uL14c (122 aa).

It belongs to the universal ribosomal protein uL14 family. In terms of assembly, part of the 50S ribosomal subunit.

It localises to the plastid. The protein localises to the chloroplast. Functionally, binds to 23S rRNA. This Piper cenocladum (Ant piper) protein is Large ribosomal subunit protein uL14c.